The following is a 423-amino-acid chain: Histidine--tRNA ligase (423 aa).

Belongs to the class-II aminoacyl-tRNA synthetase family. As to quaternary structure, homodimer.

The protein resides in the cytoplasm. It catalyses the reaction tRNA(His) + L-histidine + ATP = L-histidyl-tRNA(His) + AMP + diphosphate + H(+). This Rhodococcus opacus (strain B4) protein is Histidine--tRNA ligase.